Reading from the N-terminus, the 436-residue chain is 3-ketoacyl-CoA thiolase (436 aa).

Residue Cys99 is the Acyl-thioester intermediate of the active site. Catalysis depends on proton acceptor residues His392 and Cys422.

This sequence belongs to the thiolase-like superfamily. Thiolase family. Heterotetramer of two alpha chains (FadJ) and two beta chains (FadI).

It localises to the cytoplasm. It catalyses the reaction an acyl-CoA + acetyl-CoA = a 3-oxoacyl-CoA + CoA. The protein operates within lipid metabolism; fatty acid beta-oxidation. In terms of biological role, catalyzes the final step of fatty acid oxidation in which acetyl-CoA is released and the CoA ester of a fatty acid two carbons shorter is formed. The chain is 3-ketoacyl-CoA thiolase from Pseudoalteromonas translucida (strain TAC 125).